The sequence spans 162 residues: 2-C-methyl-D-erythritol 2,4-cyclodiphosphate synthase (162 aa).

A divalent metal cation-binding residues include D8 and H10. Residues 8–10 (DVH) and 36–37 (HS) contribute to the 4-CDP-2-C-methyl-D-erythritol 2-phosphate site. Residue H44 coordinates a divalent metal cation. Residues 58-60 (DIG), 63-67 (FPDTD), 102-108 (AQAPKMA), 134-137 (TTTE), F141, and R144 each bind 4-CDP-2-C-methyl-D-erythritol 2-phosphate.

It belongs to the IspF family. Homotrimer. The cofactor is a divalent metal cation.

The enzyme catalyses 4-CDP-2-C-methyl-D-erythritol 2-phosphate = 2-C-methyl-D-erythritol 2,4-cyclic diphosphate + CMP. The protein operates within isoprenoid biosynthesis; isopentenyl diphosphate biosynthesis via DXP pathway; isopentenyl diphosphate from 1-deoxy-D-xylulose 5-phosphate: step 4/6. In terms of biological role, involved in the biosynthesis of isopentenyl diphosphate (IPP) and dimethylallyl diphosphate (DMAPP), two major building blocks of isoprenoid compounds. Catalyzes the conversion of 4-diphosphocytidyl-2-C-methyl-D-erythritol 2-phosphate (CDP-ME2P) to 2-C-methyl-D-erythritol 2,4-cyclodiphosphate (ME-CPP) with a corresponding release of cytidine 5-monophosphate (CMP). The polypeptide is 2-C-methyl-D-erythritol 2,4-cyclodiphosphate synthase (Yersinia pseudotuberculosis serotype IB (strain PB1/+)).